We begin with the raw amino-acid sequence, 458 residues long: Ammonium transporter Rh type B (458 aa).

The Cytoplasmic segment spans residues 1–13 (MAGSSRRAGGRRL). A helical transmembrane segment spans residues 14-34 (QLPLLCLLLQGATAILFAVFV). At 35 to 61 (RYNHETDAALWHWGNHSNPDNEFYFRY) the chain is on the extracellular side. A glycan (N-linked (GlcNAc...) asparagine) is linked at Asn-49. A helical membrane pass occupies residues 62-82 (PSFQDVHTMIFVGFGFLMAFL). At 83 to 86 (QRYG) the chain is on the cytoplasmic side. A helical transmembrane segment spans residues 87–107 (FSSVGFTFLLAAFALQWSTLV). Topologically, residues 108 to 124 (QGFLHTFHGGHIHIGVE) are extracellular. Residues 125 to 145 (SMINADFCAGAVLISFGAILG) form a helical membrane-spanning segment. Residues 146-149 (KTGP) are Cytoplasmic-facing. A helical membrane pass occupies residues 150-170 (AQLLLMALLEVVLFGLNEFVL). The Extracellular portion of the chain corresponds to 171–178 (LSLLGVKD). A helical transmembrane segment spans residues 179–201 (AGGSMTIHTFGAYFGLVLSRVLY). Over 202 to 219 (RPQLEKSKHRQSSVYHSD) the chain is Cytoplasmic. The chain crosses the membrane as a helical span at residues 220–240 (LFAMIGTIFLWIFWPSFNSAP). Over 241–251 (TPLGDGQHRTA) the chain is Extracellular. A helical membrane pass occupies residues 252-272 (LNTYYSLTASTLSTFALSALV). Over 273 to 282 (GRDGRLDMVH) the chain is Cytoplasmic. Residues 283–303 (VQNAALAGGVVVGTSAEMMLT) form a helical membrane-spanning segment. Pro-304 is a topological domain (extracellular). Residues 305–325 (FGALAAGFLAGTVSTLGFKFF) traverse the membrane as a helical segment. The Cytoplasmic segment spans residues 326 to 346 (TPILESKFKIQDTCGVHNLHG). A helical transmembrane segment spans residues 347-367 (MPGVLGALLGVLVAGLATHDS). Residues 368 to 393 (YGEGLESVFPLIAEGQRSSTSQALHQ) are Extracellular-facing. The helical transmembrane segment at 394–414 (LFGLFVTLIFASVGGGLGGLL) threads the bilayer. The Cytoplasmic segment spans residues 415-458 (LRLPFLDSPPDSQCYEDQIYWEVPEEHADLAQGSLRPEEPDTQA). The interval 416-424 (RLPFLDSPP) is interaction with ANK3. Residues 429-432 (YEDQ) carry the Basolateral sorting signal motif.

The protein belongs to the ammonium transporter (TC 2.A.49) family. Rh subfamily. Interacts (via C-terminus) with ANK2 and ANK3; required for targeting to the basolateral membrane. N-glycosylated.

The protein resides in the cell membrane. It is found in the basolateral cell membrane. It carries out the reaction NH4(+)(in) = NH4(+)(out). It catalyses the reaction methylamine(out) = methylamine(in). The catalysed reaction is CO2(out) = CO2(in). In terms of biological role, ammonium transporter involved in the maintenance of acid-base homeostasis. Transports ammonium and its related derivative methylammonium across the basolateral plasma membrane of epithelial cells likely contributing to renal transepithelial ammonia transport and ammonia metabolism. May transport either NH4(+) or NH3 ammonia species predominantly mediating an electrogenic NH4(+) transport. May act as a CO2 channel providing for renal acid secretion. The chain is Ammonium transporter Rh type B (RHBG) from Sus scrofa (Pig).